Here is a 1607-residue protein sequence, read N- to C-terminus: Thrombospondin type-1 domain-containing protein 7B (1607 aa).

The N-terminal stretch at 1–31 (MFLRSDLAVTHWVSRSMRKLFLVLSLLLSQA) is a signal peptide. The Extracellular portion of the chain corresponds to 32–1556 (AHLEGRKDNQ…QPLDPDGRVK (1525 aa)). 18 consecutive TSP type-1 domains span residues 40–98 (NQFL…RVCD), 102–177 (DLFQ…IPCP), 179–233 (DCVV…VSCP), 336–392 (DCET…IAEG), 399–482 (PRYS…VPCS), 484–543 (DCIV…PMCH), 601–661 (DCVV…HSCT), 662–735 (QLYW…LPCK), 737–796 (DCLV…SLCP), 797–869 (SYRW…IPCR), 871–924 (DCTF…CPCD), 925–999 (TFMS…IPCP), 1001–1126 (DCKL…LLCP), 1128–1182 (ECVM…ENCF), 1183–1246 (QFQY…VECV), 1248–1303 (NCQL…TPCY), 1304–1369 (SWVL…VPCP), and 1371–1432 (DCHI…GKCY). N-linked (GlcNAc...) asparagine glycosylation is found at Asn150 and Asn219. Cystine bridges form between Cys411–Cys477, Cys431–Cys481, and Cys442–Cys466. Disulfide bonds link Cys602–Cys643, Cys613–Cys617, and Cys655–Cys660. N-linked (GlcNAc...) asparagine glycosylation occurs at Asn683. Disulfide bonds link Cys738–Cys779, Cys749–Cys753, and Cys789–Cys795. Asn757 carries N-linked (GlcNAc...) asparagine glycosylation. Asn842 is a glycosylation site (N-linked (GlcNAc...) asparagine). An N-linked (GlcNAc...) asparagine glycan is attached at Asn933. Intrachain disulfides connect Cys937-Cys994, Cys960-Cys998, Cys971-Cys984, Cys1002-Cys1039, and Cys1013-Cys1017. Residue Asn985 is glycosylated (N-linked (GlcNAc...) asparagine). Asn1105 is a glycosylation site (N-linked (GlcNAc...) asparagine). Cys1121 and Cys1125 form a disulfide bridge. N-linked (GlcNAc...) asparagine glycans are attached at residues Asn1187 and Asn1199. 3 disulfide bridges follow: Cys1249-Cys1287, Cys1260-Cys1264, and Cys1297-Cys1302. Residues Asn1309 and Asn1335 are each glycosylated (N-linked (GlcNAc...) asparagine). 3 disulfides stabilise this stretch: Cys1372–Cys1416, Cys1383–Cys1387, and Cys1426–Cys1431. N-linked (GlcNAc...) asparagine glycans are attached at residues Asn1457 and Asn1525. A helical membrane pass occupies residues 1557–1577 (MWVYGVSGGSFLIMIFLVFTS). Topologically, residues 1578 to 1607 (YLVCKKPKPHQSTPRHQKPLTLAYDGDLDM) are cytoplasmic.

It is found in the membrane. The protein is Thrombospondin type-1 domain-containing protein 7B of Mus musculus (Mouse).